Reading from the N-terminus, the 405-residue chain is 8-amino-7-oxononanoate synthase 1 (405 aa).

Residue arginine 29 coordinates substrate. A pyridoxal 5'-phosphate-binding site is contributed by 116–117 (GY). Residue histidine 141 coordinates substrate. Residues serine 187, histidine 215, and threonine 247 each contribute to the pyridoxal 5'-phosphate site. An N6-(pyridoxal phosphate)lysine modification is found at lysine 250. Residue threonine 368 coordinates substrate.

It belongs to the class-II pyridoxal-phosphate-dependent aminotransferase family. BioF subfamily. As to quaternary structure, homodimer. Pyridoxal 5'-phosphate is required as a cofactor.

It catalyses the reaction 6-carboxyhexanoyl-[ACP] + L-alanine + H(+) = (8S)-8-amino-7-oxononanoate + holo-[ACP] + CO2. It participates in cofactor biosynthesis; biotin biosynthesis. In terms of biological role, catalyzes the decarboxylative condensation of pimeloyl-[acyl-carrier protein] and L-alanine to produce 8-amino-7-oxononanoate (AON), [acyl-carrier protein], and carbon dioxide. This Polaromonas sp. (strain JS666 / ATCC BAA-500) protein is 8-amino-7-oxononanoate synthase 1.